A 639-amino-acid polypeptide reads, in one-letter code: 1-deoxy-D-xylulose-5-phosphate synthase (639 aa).

Thiamine diphosphate-binding positions include H79 and 120–122; that span reads AHS. Position 151 (D151) interacts with Mg(2+). Thiamine diphosphate contacts are provided by residues 152–153, N180, Y289, and E371; that span reads GA. A Mg(2+)-binding site is contributed by N180.

This sequence belongs to the transketolase family. DXPS subfamily. In terms of assembly, homodimer. Requires Mg(2+) as cofactor. The cofactor is thiamine diphosphate.

The catalysed reaction is D-glyceraldehyde 3-phosphate + pyruvate + H(+) = 1-deoxy-D-xylulose 5-phosphate + CO2. It functions in the pathway metabolic intermediate biosynthesis; 1-deoxy-D-xylulose 5-phosphate biosynthesis; 1-deoxy-D-xylulose 5-phosphate from D-glyceraldehyde 3-phosphate and pyruvate: step 1/1. Its function is as follows. Catalyzes the acyloin condensation reaction between C atoms 2 and 3 of pyruvate and glyceraldehyde 3-phosphate to yield 1-deoxy-D-xylulose-5-phosphate (DXP). The sequence is that of 1-deoxy-D-xylulose-5-phosphate synthase from Rhizorhabdus wittichii (strain DSM 6014 / CCUG 31198 / JCM 15750 / NBRC 105917 / EY 4224 / RW1) (Sphingomonas wittichii).